A 317-amino-acid polypeptide reads, in one-letter code: Glycine--tRNA ligase alpha subunit (317 aa).

The protein belongs to the class-II aminoacyl-tRNA synthetase family. In terms of assembly, tetramer of two alpha and two beta subunits.

It is found in the cytoplasm. It catalyses the reaction tRNA(Gly) + glycine + ATP = glycyl-tRNA(Gly) + AMP + diphosphate. The protein is Glycine--tRNA ligase alpha subunit of Pseudomonas fluorescens (strain SBW25).